The chain runs to 478 residues: CDK5 and ABL1 enzyme substrate 2 (478 aa).

The segment at 1-121 (MAAAAAGGAP…GLGLDGQRQR (121 aa)) is disordered. The segment covering 11-24 (GPAPGPAGPPPPAA) has biased composition (pro residues). The segment covering 25 to 35 (PTSAARAPPQA) has biased composition (low complexity). The span at 36–46 (LRRRGDSRRRQ) shows a compositional bias: basic residues. A compositionally biased stretch (pro residues) spans 69–92 (EKPPPPPAEAREPPAPPPPEPPTG). A phosphoserine mark is found at Ser-130 and Ser-208. A disordered region spans residues 257–296 (SDSHGLLPTPRPSVPRTLPGSRHKPAPTKSAPASTELGSD).

The protein belongs to the cyclin family. In terms of assembly, binds to CDK3, CDK5 and ABL1. The C-terminal cyclin-box-like region binds to CDK5.

In terms of biological role, unknown. Probably involved in G1-S cell cycle transition. This chain is CDK5 and ABL1 enzyme substrate 2 (CABLES2), found in Homo sapiens (Human).